The chain runs to 331 residues: Probable transcriptional regulatory protein At2g25830 (331 aa).

Belongs to the TACO1 family.

The sequence is that of Probable transcriptional regulatory protein At2g25830 from Arabidopsis thaliana (Mouse-ear cress).